Reading from the N-terminus, the 130-residue chain is UPF0225 protein DR_0483 (130 aa).

Belongs to the UPF0225 family.

The sequence is that of UPF0225 protein DR_0483 from Deinococcus radiodurans (strain ATCC 13939 / DSM 20539 / JCM 16871 / CCUG 27074 / LMG 4051 / NBRC 15346 / NCIMB 9279 / VKM B-1422 / R1).